Reading from the N-terminus, the 273-residue chain is WIMGHMVNAIAQIDEFVNLGANSIETDVSFDSSANPEYTYHGVPCDCGRTCTKWEHFNEFLKGLRKATTPGDSKYHEKLVLVVFDLKTGSLYDNQASDAGKKLAKSLLQNYWNNGNNGGRAYIVLSIPNLAHYKLITGFKEALTSEGHPELMDKVGYDFSGNDDIGDVANAYKKAGVTGHVWQSDGITNCLLRGLDRVRKAVANRDSSSGYINKVHYWTVDKRQSTRDALDAGVDGIMTNYPDVIADVLNESAYKAKFRIASYDDNPWETFKN.

H5 is an active-site residue. Mg(2+) contacts are provided by E25 and D27. H41 functions as the Nucleophile in the catalytic mechanism. Disulfide bonds link C45-C51 and C47-C190. D85 lines the Mg(2+) pocket. N-linked (GlcNAc...) asparagine glycosylation occurs at N250.

The protein belongs to the arthropod phospholipase D family. Class II subfamily. Mg(2+) is required as a cofactor. As to expression, expressed by the venom gland.

It localises to the secreted. The catalysed reaction is an N-(acyl)-sphingosylphosphocholine = an N-(acyl)-sphingosyl-1,3-cyclic phosphate + choline. It catalyses the reaction an N-(acyl)-sphingosylphosphoethanolamine = an N-(acyl)-sphingosyl-1,3-cyclic phosphate + ethanolamine. The enzyme catalyses a 1-acyl-sn-glycero-3-phosphocholine = a 1-acyl-sn-glycero-2,3-cyclic phosphate + choline. It carries out the reaction a 1-acyl-sn-glycero-3-phosphoethanolamine = a 1-acyl-sn-glycero-2,3-cyclic phosphate + ethanolamine. Its function is as follows. Dermonecrotic toxins cleave the phosphodiester linkage between the phosphate and headgroup of certain phospholipids (sphingolipid and lysolipid substrates), forming an alcohol (often choline) and a cyclic phosphate. This toxin acts on sphingomyelin (SM). It may also act on ceramide phosphoethanolamine (CPE), lysophosphatidylcholine (LPC) and lysophosphatidylethanolamine (LPE), but not on lysophosphatidylserine (LPS), and lysophosphatidylglycerol (LPG). It acts by transphosphatidylation, releasing exclusively cyclic phosphate products as second products. Induces dermonecrosis, hemolysis, increased vascular permeability, edema, inflammatory response, and platelet aggregation. The polypeptide is Dermonecrotic toxin LapSicTox-alphaIB1aii (Loxosceles apachea (Apache recluse spider)).